The primary structure comprises 560 residues: MNPDKKKRSNLIYGGYEKAPNRAFLKAMGLTDDDIAKPIVGVAVAWNEAGPCNIHLLGLSNIVKEGVRSGGGTPRVFTAPVVIDGIAMGSEGMKYSLVSREIVANTVELVVNAHGYDGFVALAGCDKTPPGMMMAMARLNIPSIIMYGGTTLPGNFKGKPITIQDVYEAVGAYSKGKITAEDLRLMEDNAIPGPGTCGGLYTANTMGLMTEALGLALPGSASPPAVDSARVKYAYETGKALMNLIEIGLKPRDILTFEAFENAITVLMASGGSTNAVLHLLAIAYEAGVKLTLDDFDRISQRTPEIVNMKPGGEYAMYDLHRVGGAPLIMKKLLEADLLHGDVITVTGKTVKQNLEEYKLPNVPHEHIVRPISNPFNPTGGIRILKGSLAPEGAVIKVSATKVRYHKGPARVFNSEEEAFKAVLEEKIQENDVVVIRYEGPKGGPGMREMLAVTSAIVGQGLGEKVALITDGRFSGATRGIMVGHVAPEAAVGGPIALLRDGDTIIIDANNGRLDVDLPQEELKKRADEWTPPPPKYKSGLLAQYARLVSSSSLGAVLLT.

Cys52 contributes to the [2Fe-2S] cluster binding site. Position 84 (Asp84) interacts with Mg(2+). Cys125 contributes to the [2Fe-2S] cluster binding site. Positions 126 and 127 each coordinate Mg(2+). Lys127 carries the N6-carboxylysine modification. Residue Cys197 participates in [2Fe-2S] cluster binding. Position 449 (Glu449) interacts with Mg(2+). Ser475 (proton acceptor) is an active-site residue.

The protein belongs to the IlvD/Edd family. Homodimer. It depends on [2Fe-2S] cluster as a cofactor. Mg(2+) is required as a cofactor.

It carries out the reaction (2R)-2,3-dihydroxy-3-methylbutanoate = 3-methyl-2-oxobutanoate + H2O. The enzyme catalyses (2R,3R)-2,3-dihydroxy-3-methylpentanoate = (S)-3-methyl-2-oxopentanoate + H2O. It participates in amino-acid biosynthesis; L-isoleucine biosynthesis; L-isoleucine from 2-oxobutanoate: step 3/4. The protein operates within amino-acid biosynthesis; L-valine biosynthesis; L-valine from pyruvate: step 3/4. Functions in the biosynthesis of branched-chain amino acids. Catalyzes the dehydration of (2R,3R)-2,3-dihydroxy-3-methylpentanoate (2,3-dihydroxy-3-methylvalerate) into 2-oxo-3-methylpentanoate (2-oxo-3-methylvalerate) and of (2R)-2,3-dihydroxy-3-methylbutanoate (2,3-dihydroxyisovalerate) into 2-oxo-3-methylbutanoate (2-oxoisovalerate), the penultimate precursor to L-isoleucine and L-valine, respectively. This Sulfurisphaera tokodaii (strain DSM 16993 / JCM 10545 / NBRC 100140 / 7) (Sulfolobus tokodaii) protein is Dihydroxy-acid dehydratase.